The chain runs to 199 residues: Prolactin (199 aa).

An intrachain disulfide couples Cys-4 to Cys-11. 3 positions are modified to phosphoserine: Ser-26, Ser-34, and Ser-90. 2 disulfide bridges follow: Cys-58/Cys-174 and Cys-191/Cys-199.

Belongs to the somatotropin/prolactin family. Interacts with PRLR.

The protein resides in the secreted. Its function is as follows. Prolactin acts primarily on the mammary gland by promoting lactation. This Loxodonta africana (African elephant) protein is Prolactin (PRL).